The primary structure comprises 310 residues: Putative F-box protein PP2-B2 (310 aa).

The segment at methionine 1–glutamate 34 is disordered. One can recognise an F-box domain in the interval proline 44–phenylalanine 90.

This is Putative F-box protein PP2-B2 (PP2B2) from Arabidopsis thaliana (Mouse-ear cress).